We begin with the raw amino-acid sequence, 1304 residues long: Splicing factor 3B subunit 1 (1304 aa).

Disordered stretches follow at residues 100 to 119 (QYDP…EDEY) and 124 to 148 (RTMI…PKMN). Positions 104–119 (FAEHRPPKIADREDEY) are enriched in basic and acidic residues. T125 is modified (phosphothreonine). Phosphoserine is present on S129. The residue at position 141 (K141) is an N6-acetyllysine. The residue at position 142 (T142) is a Phosphothreonine. A Citrulline modification is found at R157. A disordered region spans residues 172-360 (LAEKAKAGEL…PVLTPGKTPI (189 aa)). Phosphoserine is present on S194. Phosphothreonine occurs at positions 203, 207, and 211. Position 214 is an N6-acetyllysine; alternate (K214). A Glycyl lysine isopeptide (Lys-Gly) (interchain with G-Cter in SUMO2); alternate cross-link involves residue K214. A phosphothreonine mark is found at T223 and T227. The interval 223-491 (TPGHTPSLRW…VDESTLSPEE (269 aa)) is interaction with PPP1R8. Position 229 is a phosphoserine (S229). The segment covering 231–241 (RWDETPGRAKG) has biased composition (basic and acidic residues). Phosphothreonine is present on residues T235, T244, T248, T257, T261, T267, T273, and T278. S287 carries the phosphoserine modification. The segment covering 291-304 (NRWDETPKTERDTP) has biased composition (basic and acidic residues). Residues T296, T299, T303, and T313 each carry the phosphothreonine modification. S322 carries the post-translational modification Phosphoserine. A phosphothreonine mark is found at T326 and T328. S332 carries the phosphoserine modification. The residue at position 341 (T341) is a Phosphothreonine. Positions 342–352 (PASQMGGSTPV) are enriched in polar residues. Residues S344 and S349 each carry the phosphoserine modification. A phosphothreonine mark is found at T350 and T354. Phosphoserine is present on S400. Residue K413 forms a Glycyl lysine isopeptide (Lys-Gly) (interchain with G-Cter in SUMO2); alternate linkage. K413 is covalently cross-linked (Glycyl lysine isopeptide (Lys-Gly) (interchain with G-Cter in SUMO1); alternate). A Phosphothreonine modification is found at T426. Residue K430 forms a Glycyl lysine isopeptide (Lys-Gly) (interchain with G-Cter in SUMO2) linkage. T434 carries the post-translational modification Phosphothreonine; by DYRK1A. T436 bears the Phosphothreonine mark. S488 bears the Phosphoserine mark. HEAT repeat units follow at residues 529-568 (GPLF…DLVR), 569-603 (PYVH…LAKA), 604-641 (AGLA…ALGI), 643-677 (SLLP…LMGC), 680-718 (LPHL…AATP), 763-801 (NYYT…TDGV), 843-881 (KVGA…NLGA), 1010-1048 (TPPI…RGAE), 1052-1090 (AREW…AIGP), 1122-1160 (TCSP…YIGE), and 1163-1201 (KDYI…GVYG). Residues 547 to 550 (QERH) are interaction with PHF5A. 2 positions are modified to N6-acetyllysine: K554 and K562. The interaction with PHF5A stretch occupies residues 1156 to 1157 (EY). The interval 1248–1304 (QYCLQGLFHPARKVRDVYWKIYNSIYIGSQDALIAHYPRIYNDDKNTYIRYDLDYIL) is interaction with SF3B3 and SF3B5.

The protein belongs to the SF3B1 family. In terms of assembly, component of the 17S U2 SnRNP complex, a ribonucleoprotein complex that contains small nuclear RNA (snRNA) U2 and a number of specific proteins. Part of the SF3B subcomplex of the 17S U2 SnRNP complex. SF3B associates with the splicing subcomplex SF3A and a 12S RNA unit to form the U2 small nuclear ribonucleoproteins complex (U2 snRNP). Within the SF3B complex, interacts directly (via HEAT domain) with SF3B3, SF3B5, SF3B6 and (via HEAT domain) with PHF5A. The SF3B subcomplex interacts with U2AF2. Identified in the spliceosome C complex. Component of the minor (U12-type spliceosome) spliceosome. Within the minor spliceosome complex, interacts with SCNM1 and CRIPT. Component of the B-WICH complex, at least composed of SMARCA5/SNF2H, BAZ1B/WSTF, SF3B1, DEK, MYO1C, ERCC6, MYBBP1A and DDX21. Phosphorylated form interacts with PPP1R8. Interacts with PQBP1. Interacts with RBM17. Interacts with RBM39. Interacts with SETX. Interacts with RBM15. Interacts with USH1G. Interacts with SDE2. Interacts with U2AF1. Interacts with CACTIN. Interacts with ZRSR1. Interacts with CYREN. In terms of processing, phosphorylated. Phosphorylation occurs concomitantly with the splicing catalytic steps. Phosphorylation on Thr-244, Thr-248 and Thr-313 by cyclin-dependent kinases promotes interaction with PPP1R8 during mitosis. Post-translationally, citrullinated by PADI4. As to expression, ubiquitous.

The protein resides in the nucleus. It is found in the nucleus speckle. In terms of biological role, component of the 17S U2 SnRNP complex of the spliceosome, a large ribonucleoprotein complex that removes introns from transcribed pre-mRNAs. The 17S U2 SnRNP complex (1) directly participates in early spliceosome assembly and (2) mediates recognition of the intron branch site during pre-mRNA splicing by promoting the selection of the pre-mRNA branch-site adenosine, the nucleophile for the first step of splicing. Within the 17S U2 SnRNP complex, SF3B1 is part of the SF3B subcomplex, which is required for 'A' complex assembly formed by the stable binding of U2 snRNP to the branchpoint sequence in pre-mRNA. Sequence independent binding of SF3A and SF3B subcomplexes upstream of the branch site is essential, it may anchor U2 snRNP to the pre-mRNA. May also be involved in the assembly of the 'E' complex. Also acts as a component of the minor spliceosome, which is involved in the splicing of U12-type introns in pre-mRNAs. Together with other U2 snRNP complex components may also play a role in the selective processing of microRNAs (miRNAs) from the long primary miRNA transcript, pri-miR-17-92. The polypeptide is Splicing factor 3B subunit 1 (Mus musculus (Mouse)).